The primary structure comprises 148 residues: uncharacterized protein (148 aa).

The HTH asnC-type domain occupies 3–64; that stretch reads LDALDRKILE…KLNYESIGYD (62 aa). Positions 22–41 form a DNA-binding region, H-T-H motif; the sequence is YREIAKDLNVAVGTIYNRIK.

This is an uncharacterized protein from Pyrococcus horikoshii (strain ATCC 700860 / DSM 12428 / JCM 9974 / NBRC 100139 / OT-3).